Reading from the N-terminus, the 103-residue chain is Small ribosomal subunit protein uS10 (103 aa).

The protein belongs to the universal ribosomal protein uS10 family. In terms of assembly, part of the 30S ribosomal subunit.

Functionally, involved in the binding of tRNA to the ribosomes. This chain is Small ribosomal subunit protein uS10, found in Paraburkholderia xenovorans (strain LB400).